We begin with the raw amino-acid sequence, 430 residues long: MTRSEALFEQAKKTIPGGVNSPVRAFNGVGGSPLFIEKANGAYIYDADGKAYIDYVGSWGPMILGHNHPKIRAAVLAAVENGLSFGAPTELEVQMAEKVISMVPSIEQVRMVSSGTEATMSAIRLARGFTNRDKILKFEGCYHGHADCLLVKAGSGALTLGQPSSPGIPEDFAKHTLTAVYNDLDSVRTLFEQYPTDISCIIIEPVAGNMNCIPPIPGFLQGLRDICDEFGALMIIDEVMTGFRVSQSGAQGYYGVTPDLTTLGKVIGGGMPVGAFGGRKDVMQFIAPTGPVYQAGTLSGNPIAMSAGLAQMEALCEEGLYEELSAKTKRIAEGFKAAADKHGIPMAINYVGGMFGFFFTEQPEITRFDQVTQCNIEQFRIFYHGMLDEGVYLAPSAYEAGFLSMAHGEEEMRLTLEAADRVLASMKAAS.

An N6-(pyridoxal phosphate)lysine modification is found at K265.

This sequence belongs to the class-III pyridoxal-phosphate-dependent aminotransferase family. HemL subfamily. Homodimer. Pyridoxal 5'-phosphate is required as a cofactor.

It is found in the cytoplasm. It catalyses the reaction (S)-4-amino-5-oxopentanoate = 5-aminolevulinate. It functions in the pathway porphyrin-containing compound metabolism; protoporphyrin-IX biosynthesis; 5-aminolevulinate from L-glutamyl-tRNA(Glu): step 2/2. The sequence is that of Glutamate-1-semialdehyde 2,1-aminomutase from Shewanella baltica (strain OS223).